We begin with the raw amino-acid sequence, 102 residues long: NADH-quinone oxidoreductase subunit K (102 aa).

The next 3 membrane-spanning stretches (helical) occupy residues 6–26 (LEHG…GVMV), 30–50 (LLFM…AFVL), and 62–82 (VMFI…LAIV).

The protein belongs to the complex I subunit 4L family. In terms of assembly, NDH-1 is composed of 14 different subunits. Subunits NuoA, H, J, K, L, M, N constitute the membrane sector of the complex.

The protein resides in the cell inner membrane. The catalysed reaction is a quinone + NADH + 5 H(+)(in) = a quinol + NAD(+) + 4 H(+)(out). NDH-1 shuttles electrons from NADH, via FMN and iron-sulfur (Fe-S) centers, to quinones in the respiratory chain. The immediate electron acceptor for the enzyme in this species is believed to be ubiquinone. Couples the redox reaction to proton translocation (for every two electrons transferred, four hydrogen ions are translocated across the cytoplasmic membrane), and thus conserves the redox energy in a proton gradient. This is NADH-quinone oxidoreductase subunit K from Acinetobacter baumannii (strain AB307-0294).